The chain runs to 120 residues: Ribonuclease P protein component (120 aa).

The protein belongs to the RnpA family. Consists of a catalytic RNA component (M1 or rnpB) and a protein subunit.

The catalysed reaction is Endonucleolytic cleavage of RNA, removing 5'-extranucleotides from tRNA precursor.. Its function is as follows. RNaseP catalyzes the removal of the 5'-leader sequence from pre-tRNA to produce the mature 5'-terminus. It can also cleave other RNA substrates such as 4.5S RNA. The protein component plays an auxiliary but essential role in vivo by binding to the 5'-leader sequence and broadening the substrate specificity of the ribozyme. The sequence is that of Ribonuclease P protein component from Chlamydia trachomatis serovar D (strain ATCC VR-885 / DSM 19411 / UW-3/Cx).